A 1326-amino-acid polypeptide reads, in one-letter code: F-box/WD repeat-containing protein 7 (1326 aa).

Disordered regions lie at residues 1–58 (MERG…AEVG), 123–187 (DSSS…IEDE), 318–351 (TVSN…ALSR), 399–549 (GSKA…SGCS), 615–642 (RSNP…RNGS), and 797–843 (TPRS…NPPP). The segment covering 9 to 39 (SSESVTSAGERTQSAVTSSTSTWVKSQASTS) has biased composition (polar residues). A compositionally biased stretch (acidic residues) spans 165 to 187 (NDDDDDEEPEPEEDDEEELIEDE). The span at 320-348 (SNPSPAASANAAAPEEASTSNSSSTSSSA) shows a compositional bias: low complexity. Positions 403–464 (ANGSGTANSD…KLNLGSSLGA (62 aa)) are enriched in polar residues. Residues 465–486 (SSCSQHRSGSSSTSKSMESSTS) are compositionally biased toward low complexity. Positions 495–504 (VYTNTNSNDY) are enriched in polar residues. 3 stretches are compositionally biased toward low complexity: residues 510 to 520 (TTSGSSTSGGS), 528 to 546 (NVSA…SQES), and 616 to 631 (SNPP…GANP). Composition is skewed to polar residues over residues 632–642 (TASVRQRRNGS) and 797–824 (TPRS…STPG). Residue T813 is modified to Phosphothreonine. S825 is modified (phosphoserine). Residues 889–935 (RDFISLLPRELALFVLSYLEPKDLLRAAQTCRSWRFLCDDNLLWKEK) enclose the F-box domain. WD repeat units lie at residues 992–1030 (GHDD…CLRT), 1033–1070 (GHTG…CVHT), 1073–1110 (GHTS…CLHV), 1113–1150 (GHLA…CLHT), 1153–1190 (GHTN…CKHT), 1193–1232 (GHQS…QTLS), and 1236–1273 (KHHS…FIRN).

In terms of assembly, part of a SCF E3 ubiquitin-protein ligase complex. Interacts with Myc and puf. Interacts with CycE. Expressed in follicle cell epithelium and imaginal disks, particularly in the morphogenetic furrow.

The protein localises to the nucleus. It functions in the pathway protein modification; protein ubiquitination. Functionally, substrate recognition component of a SCF (SKP1-CUL1-F-box protein) E3 ubiquitin-protein ligase complex which mediates the ubiquitination and subsequent proteasomal degradation of target proteins. Probably recognizes and binds to phosphorylated target proteins. In the wing and eye, negatively regulates cell growth and proliferation by mediating the degradation of Myc and cyclin E, respectively. Required for endocycles, but not mitosis in follicle cell epithelium. The chain is F-box/WD repeat-containing protein 7 from Drosophila melanogaster (Fruit fly).